The primary structure comprises 579 residues: Matrix metalloproteinase-C (579 aa).

The N-terminal stretch at 1–17 (MRLIYVIAILLVSTCQA) is a signal peptide. Positions 18–129 (GFFSSLVSRF…SRCGVTDAPL (112 aa)) are cleaved as a propeptide — activation peptide. Positions 32–51 (NSSPSSSSSSSSFSNSRKPS) are disordered. Residues 33 to 50 (SSPSSSSSSSSFSNSRKP) show a composition bias toward low complexity. The short motif at 120–127 (SRCGVTDA) is the Cysteine switch element. The Zn(2+) site is built by Cys122, His200, Asp202, His215, and His225. Asn231 carries an N-linked (GlcNAc...) asparagine glycan. His254 lines the Zn(2+) pocket. Glu255 is a catalytic residue. Residues His258 and His264 each contribute to the Zn(2+) site. The interval 307-394 (SGRSSSGSDF…SSSGSSGGGC (88 aa)) is disordered. Positions 315-324 (DFGGSSGGGS) are enriched in gly residues. Positions 325–341 (RTTARPTTTTRSWFGRF) are enriched in low complexity. The span at 373–394 (WGSGSGSSGRGGSSSGSSGGGC) shows a compositional bias: gly residues. 2 Hemopexin repeats span residues 395 to 437 (PSHI…FPSA) and 438 to 490 (PTPV…LGFS).

It belongs to the peptidase M10A family. It depends on Zn(2+) as a cofactor.

Its subcellular location is the secreted. The protein localises to the extracellular space. It is found in the extracellular matrix. With respect to regulation, inhibited by human TIMP1 and TIMP2 and the broad MMP inhibitors BB94 (Batimastat) and CT543. Its function is as follows. Metalloproteinase. The protein is Matrix metalloproteinase-C of Caenorhabditis elegans.